The following is a 117-amino-acid chain: Large ribosomal subunit protein uL18 (117 aa).

The protein belongs to the universal ribosomal protein uL18 family. As to quaternary structure, part of the 50S ribosomal subunit; part of the 5S rRNA/L5/L18/L25 subcomplex. Contacts the 5S and 23S rRNAs.

In terms of biological role, this is one of the proteins that bind and probably mediate the attachment of the 5S RNA into the large ribosomal subunit, where it forms part of the central protuberance. The protein is Large ribosomal subunit protein uL18 of Pasteurella multocida (strain Pm70).